Here is a 149-residue protein sequence, read N- to C-terminus: uncharacterized protein (149 aa).

2 disordered regions span residues 24-74 (TSQG…NDLE) and 129-149 (AIQD…PRAP). A compositionally biased stretch (basic and acidic residues) spans 28–42 (EDVKPEPKPEVDEKV). Residues 102–131 (SELESLKEKVSSATSMEELREIMEEFRAIQ) adopt a coiled-coil conformation.

This is an uncharacterized protein from Archaeoglobus fulgidus (strain ATCC 49558 / DSM 4304 / JCM 9628 / NBRC 100126 / VC-16).